The following is a 693-amino-acid chain: Auxin response factor 10 (693 aa).

The TF-B3 DNA-binding region spans 115-217 (FAKTLTQSDA…DLCVGIRRAK (103 aa)). In terms of domain architecture, PB1 spans 580 to 668 (TGHCKVFMES…DIGGDNVRKT (89 aa)).

This sequence belongs to the ARF family. As to quaternary structure, homodimers and heterodimers. Expressed in the whole plant.

It localises to the nucleus. Functionally, auxin response factors (ARFs) are transcriptional factors that bind specifically to the DNA sequence 5'-TGTCTC-3' found in the auxin-responsive promoter elements (AuxREs). Could act as transcriptional activator or repressor. Formation of heterodimers with Aux/IAA proteins may alter their ability to modulate early auxin response genes expression. The polypeptide is Auxin response factor 10 (ARF10) (Arabidopsis thaliana (Mouse-ear cress)).